Reading from the N-terminus, the 427-residue chain is 3-phosphoshikimate 1-carboxyvinyltransferase (427 aa).

The 3-phosphoshikimate site is built by Lys-22, Ser-23, and Arg-27. Residue Lys-22 coordinates phosphoenolpyruvate. Phosphoenolpyruvate-binding residues include Gly-96 and Arg-124. 7 residues coordinate 3-phosphoshikimate: Ser-170, Ser-171, Gln-172, Ser-199, Asp-313, Asn-336, and Lys-340. Gln-172 serves as a coordination point for phosphoenolpyruvate. Asp-313 serves as the catalytic Proton acceptor. 3 residues coordinate phosphoenolpyruvate: Arg-344, Arg-386, and Lys-411.

It belongs to the EPSP synthase family. Monomer.

Its subcellular location is the cytoplasm. The enzyme catalyses 3-phosphoshikimate + phosphoenolpyruvate = 5-O-(1-carboxyvinyl)-3-phosphoshikimate + phosphate. The protein operates within metabolic intermediate biosynthesis; chorismate biosynthesis; chorismate from D-erythrose 4-phosphate and phosphoenolpyruvate: step 6/7. In terms of biological role, catalyzes the transfer of the enolpyruvyl moiety of phosphoenolpyruvate (PEP) to the 5-hydroxyl of shikimate-3-phosphate (S3P) to produce enolpyruvyl shikimate-3-phosphate and inorganic phosphate. The sequence is that of 3-phosphoshikimate 1-carboxyvinyltransferase from Aeromonas salmonicida.